Consider the following 255-residue polypeptide: Venom allergen-1 (255 aa).

An N-terminal signal peptide occupies residues 1-21 (MASHVIVKFITAAILIGSCYA). The SCP domain occupies 65–210 (LKKHNELRAE…VIKYYLVCNY (146 aa)). Residues asparagine 146 and asparagine 209 are each glycosylated (N-linked (GlcNAc...) asparagine).

This sequence belongs to the CRISP family. As to quaternary structure, interacts with human LRPPRC; the interaction interrupts association between BECN1 and LRPPRC. Interacts with human CD4. (Microbial infection) Interacts with Zika virus envelope protein E and Zika virus-like particles; the interaction does not affect Zika virus replication in human endothelial cells and keratinocytes. As to expression, saliva (at protein level). Female salivary gland. No or low-level expression in female hemolymph, midgut, Malpighian tubule system and ovary. No or low-level expression in male tissues.

It localises to the secreted. Its subcellular location is the host endosome. The protein localises to the host mitochondrion. Its function is as follows. Activates autophagy in human monocytic cells, dendritic cells and macrophages. Promotes activation of human CD4(+) T-cells. Does not affect cytokine expression in human monocytic cells. (Microbial infection) Promotes dengue virus type 2 replication in human monocytic cells, dendritic cells and macrophages. Pro-viral properties are linked to BECN1-mediated autophagy activation in the host. Does not directly interact with the purified envelope protein of dengue virus type 2. Functionally, (Microbial infection) Promotes Zika virus replication in human monocytic cells, dendritic cells and macrophages. Facilitates Zika virus transmission from infected mosquitoes to the host in mouse model. Pro-viral properties are linked to BECN1-mediated autophagy activation in the host. Does not affect Zika virus replication in human endothelial cells and keratinocytes. In terms of biological role, (Microbial infection) Promotes Semliki Forest virus replication in human monocytic cells. Its function is as follows. (Microbial infection) Does not influence Batai virus replication in human monocytic cells. The polypeptide is Venom allergen-1 (Aedes aegypti (Yellowfever mosquito)).